A 358-amino-acid polypeptide reads, in one-letter code: MTPRTRADLETIPAYIPGKNFPGAIKLASNETTLGPLPSVRDAIADAAANANRYPDNGHVALIAALADHLGVATENIAAGCGSVSLCQELVQATCNDGDEVIFAWRSFEAYPVVTQVAGATPVKVPLTADHGHDLDAMLAAITDRTRLIFVCNPNNPTGTALTKAELERFLDAVPADVLVALDEAYFEYNRSDADGIELFRGRPNVVVLRTFSKAYGLAGIRVGYAVADPAVVTALTKVHIAFAVNAVAQAAAIASLAASGELLARTDGVVAERKRVRDALLAAGYEVPESAANFVYLPLGAHSGAFAAASAEAGVLLRPYGDDGVRITIGDPAENDAFLAFATSTEARSLANVAVRA.

N6-(pyridoxal phosphate)lysine is present on lysine 214.

It belongs to the class-II pyridoxal-phosphate-dependent aminotransferase family. In terms of assembly, homodimer. The cofactor is pyridoxal 5'-phosphate.

It carries out the reaction an aromatic L-alpha-amino acid + 2-oxoglutarate = an aromatic oxo-acid + L-glutamate. In terms of biological role, aminotransferase that catalyzes the conversion of aromatic amino acids and 2-oxoglutarate into corresponding aromatic oxo acids and L-glutamate. This is Aromatic amino acid aminotransferase from Rhodococcus jostii (strain RHA1).